Consider the following 541-residue polypeptide: Pseudokinase FAM20A (541 aa).

Positions 1–33 (MPGLRRDRLLTLLLLGALLSADLYFHLWPQVQR) are cleaved as a signal peptide. Residues 38 to 90 (RERPRGCPCTGRASSLARDSAAAASDPGTIVHNFSRTEPRTEPAGGSHSGSSS) are disordered. The segment covering 49–63 (RASSLARDSAAAASD) has biased composition (low complexity). 3 N-linked (GlcNAc...) asparagine glycosylation sites follow: Asn70, Asn145, and Asn287. 4 disulfide bridges follow: Cys314/Cys330, Cys319/Cys323, Cys378/Cys452, and Cys453/Cys512. A glycan (N-linked (GlcNAc...) asparagine) is linked at Asn388. Residue Asn538 is glycosylated (N-linked (GlcNAc...) asparagine).

It belongs to the FAM20 family. In terms of assembly, interacts with FAM20C; probably forming a heterotetramer of 2 subunits of FAM20A and 2 subunits of FAM20C. N-glycosylated. Highly expressed in lung and liver. Intermediate levels in thymus and ovary.

It is found in the secreted. It localises to the golgi apparatus. The protein localises to the endoplasmic reticulum. In terms of biological role, pseudokinase that acts as an allosteric activator of the Golgi serine/threonine protein kinase FAM20C and is involved in biomineralization of teeth. Forms a complex with FAM20C and increases the ability of FAM20C to phosphorylate the proteins that form the 'matrix' that guides the deposition of the enamel minerals. The polypeptide is Pseudokinase FAM20A (Homo sapiens (Human)).